Here is a 198-residue protein sequence, read N- to C-terminus: DNA damage response protein D (198 aa).

Residues 124-198 are disordered; the sequence is SAAPTDPAGP…SEAGENTPAA (75 aa). A compositionally biased stretch (basic and acidic residues) spans 136 to 180; sequence PGTDRAERTAAERTASERATHDRASTERPARPRRSAEPEAVRTED.

Functionally, appears to contribute to D.radiodurans capacity to survive exposure to ionizing radiation. May play a role in DNA repair and genome reconstitution. The chain is DNA damage response protein D (ddrD) from Deinococcus radiodurans (strain ATCC 13939 / DSM 20539 / JCM 16871 / CCUG 27074 / LMG 4051 / NBRC 15346 / NCIMB 9279 / VKM B-1422 / R1).